A 142-amino-acid chain; its full sequence is Putative mating-type transcription factor (142 aa).

Its subcellular location is the nucleus. The polypeptide is Putative mating-type transcription factor (Eremothecium gossypii (strain ATCC 10895 / CBS 109.51 / FGSC 9923 / NRRL Y-1056) (Yeast)).